The following is a 120-amino-acid chain: Holo-[acyl-carrier-protein] synthase (120 aa).

Mg(2+) is bound by residues aspartate 8 and glutamate 60.

Belongs to the P-Pant transferase superfamily. AcpS family. It depends on Mg(2+) as a cofactor.

The protein resides in the cytoplasm. The catalysed reaction is apo-[ACP] + CoA = holo-[ACP] + adenosine 3',5'-bisphosphate + H(+). Transfers the 4'-phosphopantetheine moiety from coenzyme A to a Ser of acyl-carrier-protein. The chain is Holo-[acyl-carrier-protein] synthase from Anaplasma marginale (strain Florida).